We begin with the raw amino-acid sequence, 944 residues long: Lactoferrin-binding protein A (944 aa).

The N-terminal stretch at 1-27 is a signal peptide; sequence MNKKHGFSLTLTALAIAAAFPSYAANP. Residues 52 to 178 form the TBDR plug domain; that stretch reads RRSKEATGLG…LGGAVAFRTK (127 aa). The 756-residue stretch at 189 to 944 folds into the TBDR beta-barrel domain; it reads SWGIQAKTAY…NFSLALEMKF (756 aa). Positions 927-944 match the TonB C-terminal box motif; sequence GRYAAPGRNFSLALEMKF.

It belongs to the TonB-dependent receptor family.

It localises to the cell outer membrane. Functionally, unknown. May be an iron-siderophore receptor. This chain is Lactoferrin-binding protein A (lbpA), found in Neisseria meningitidis serogroup A / serotype 4A (strain DSM 15465 / Z2491).